We begin with the raw amino-acid sequence, 43 residues long: Jararafibrase-3 (43 aa).

One can recognise a C-type lectin domain in the interval 10–43 (MNGLYYKIFDELKAWKDAEMFCRKYKPGWHLASF).

Belongs to the true venom lectin family. As to quaternary structure, monomer. Expressed by the venom gland.

It localises to the secreted. Its activity is regulated as follows. Inhibited by 1,10-phenanthroline and EDTA. May have both metalloproteinase and lectin activities. Induces local hemorrhage in the skin of rats. Degrades type-IV collagen, gelatin, laminin and fibronectin. Has hemagglutinating activity on red blood cells. The polypeptide is Jararafibrase-3 (Bothrops jararaca (Jararaca)).